The sequence spans 210 residues: tRNA (guanine-N(7)-)-methyltransferase (210 aa).

Positions 43, 68, 95, and 117 each coordinate S-adenosyl-L-methionine. The active site involves Asp117. Residues Lys121, Asp153, and 190-193 (TEYE) contribute to the substrate site.

The protein belongs to the class I-like SAM-binding methyltransferase superfamily. TrmB family.

It carries out the reaction guanosine(46) in tRNA + S-adenosyl-L-methionine = N(7)-methylguanosine(46) in tRNA + S-adenosyl-L-homocysteine. It functions in the pathway tRNA modification; N(7)-methylguanine-tRNA biosynthesis. Functionally, catalyzes the formation of N(7)-methylguanine at position 46 (m7G46) in tRNA. The polypeptide is tRNA (guanine-N(7)-)-methyltransferase (Macrococcus caseolyticus (strain JCSC5402) (Macrococcoides caseolyticum)).